The chain runs to 585 residues: MALASGVTFAGYTVVRMLGCSAMGEVYLVQHPGFPGWQALKVLSPAMAADDEFRRRFQRETEVAARLFHPHILEVHDRGEFDGQLWIAMDYVDGIDATQHMADRFPAVLPVGEVLAIVTAVAGALDYAHQRGLLHRDVNPANVVLTSQSAGDQRILLADFGIASQPSYPAPELSAGADVDGRADQYALALTAIHLFAGAPPVDRSHTGPLQPPKLSAFRPDLARLDGVLSRALATAPADRFGSCREFADAMNEQAGVAIADQSSGGVDASEVTAAAGEEAYVVDYPAYGWPEAVDCKEPSARAPAPAAPTPQRRGSMLQSAAGVLARRLDNFSTATKAPASPTRRRPRRILVGAVAVLLLAGLFAVGIVIGRKTNTTATEVARPPTSGSAVPSAPTTTVAVTAPVPLDGTYRIEIQRSKQTYDYTPTPQPPDVNTWWAFRTSCTPTECLAAATMLDDNDHTQAKTPPVRPFLMQFGEGQWKSRPETVQFPCVGPNGSPSTQATTQLLALRPQPQGDLVGEMVVTVHSNECGQQGAVIRIPAVASRSGDLPPAVTVPDPATIPDTPDTTSTATLTPPTTTAPGPGR.

Residues 1–349 (MALASGVTFA…ASPTRRRPRR (349 aa)) are Cytoplasmic-facing. The Protein kinase domain occupies 12-252 (YTVVRMLGCS…SCREFADAMN (241 aa)). Residues 18-26 (LGCSAMGEV) and K41 contribute to the ATP site. Residues K41, D90, and V92 each coordinate ADP. D137 acts as the Proton acceptor in catalysis. The chain crosses the membrane as a helical span at residues 350–370 (ILVGAVAVLLLAGLFAVGIVI). Residues 371 to 585 (GRKTNTTATE…PTTTAPGPGR (215 aa)) are Extracellular-facing. The segment at 546–585 (SGDLPPAVTVPDPATIPDTPDTTSTATLTPPTTTAPGPGR) is disordered. Residues 554–585 (TVPDPATIPDTPDTTSTATLTPPTTTAPGPGR) are compositionally biased toward low complexity.

This sequence belongs to the protein kinase superfamily. Ser/Thr protein kinase family. Requires Mn(2+) as cofactor. Autophosphorylated at serine and threonine residues.

Its subcellular location is the cytoplasm. The protein resides in the cell membrane. It carries out the reaction L-seryl-[protein] + ATP = O-phospho-L-seryl-[protein] + ADP + H(+). The enzyme catalyses L-threonyl-[protein] + ATP = O-phospho-L-threonyl-[protein] + ADP + H(+). Its function is as follows. Plays an important role in slowing down the growth of mycobacteria within the infected host. This is Serine/threonine-protein kinase PknI (pknI) from Mycobacterium bovis (strain ATCC BAA-935 / AF2122/97).